The following is a 404-amino-acid chain: Serine/threonine transporter SstT (404 aa).

Transmembrane regions (helical) follow at residues 17–37 (IGIG…LTGF), 39–59 (ILGK…VFAL), 75–95 (MTLI…VAVL), 138–158 (ALAT…GLAL), 179–199 (IVVW…FTTI), 212–232 (FLIL…NPLI), 287–307 (IPLG…VLTL), and 313–333 (FGIP…AVSA).

Belongs to the dicarboxylate/amino acid:cation symporter (DAACS) (TC 2.A.23) family.

It is found in the cell membrane. It catalyses the reaction L-serine(in) + Na(+)(in) = L-serine(out) + Na(+)(out). The enzyme catalyses L-threonine(in) + Na(+)(in) = L-threonine(out) + Na(+)(out). In terms of biological role, involved in the import of serine and threonine into the cell, with the concomitant import of sodium (symport system). The polypeptide is Serine/threonine transporter SstT (Streptococcus pyogenes serotype M2 (strain MGAS10270)).